The primary structure comprises 282 residues: Bifunctional protein FolD (282 aa).

NADP(+)-binding positions include 164 to 166 (GRS) and Ser-189.

It belongs to the tetrahydrofolate dehydrogenase/cyclohydrolase family. In terms of assembly, homodimer.

It carries out the reaction (6R)-5,10-methylene-5,6,7,8-tetrahydrofolate + NADP(+) = (6R)-5,10-methenyltetrahydrofolate + NADPH. The enzyme catalyses (6R)-5,10-methenyltetrahydrofolate + H2O = (6R)-10-formyltetrahydrofolate + H(+). It participates in one-carbon metabolism; tetrahydrofolate interconversion. Functionally, catalyzes the oxidation of 5,10-methylenetetrahydrofolate to 5,10-methenyltetrahydrofolate and then the hydrolysis of 5,10-methenyltetrahydrofolate to 10-formyltetrahydrofolate. This Streptococcus suis (strain 05ZYH33) protein is Bifunctional protein FolD.